Consider the following 368-residue polypeptide: tRNA-specific 2-thiouridylase MnmA (368 aa).

ATP-binding positions include 11 to 18 (GMSGGVDS) and Met-37. The interval 97–99 (NPD) is interaction with target base in tRNA. Cys-102 (nucleophile) is an active-site residue. Cys-102 and Cys-199 are disulfide-bonded. Gly-127 serves as a coordination point for ATP. The interval 149–151 (KDQ) is interaction with tRNA. Residue Cys-199 is the Cysteine persulfide intermediate of the active site. An interaction with tRNA region spans residues 311–312 (RY).

It belongs to the MnmA/TRMU family. Interacts with TusE.

The protein localises to the cytoplasm. It catalyses the reaction S-sulfanyl-L-cysteinyl-[protein] + uridine(34) in tRNA + AH2 + ATP = 2-thiouridine(34) in tRNA + L-cysteinyl-[protein] + A + AMP + diphosphate + H(+). Catalyzes the 2-thiolation of uridine at the wobble position (U34) of tRNA(Lys), tRNA(Glu) and tRNA(Gln), leading to the formation of s(2)U34, the first step of tRNA-mnm(5)s(2)U34 synthesis. Sulfur is provided by IscS, via a sulfur-relay system. Binds ATP and its substrate tRNAs. This Klebsiella pneumoniae subsp. pneumoniae (strain ATCC 700721 / MGH 78578) protein is tRNA-specific 2-thiouridylase MnmA.